A 484-amino-acid polypeptide reads, in one-letter code: Adenylosuccinate synthetase, chloroplastic (484 aa).

The transit peptide at 1 to 44 (MSLSTLSHPAAAAAGSGKSLFPAGPAAQSVHFPKARLPVPAAVS) directs the protein to the chloroplast. GTP contacts are provided by residues 71–77 (GDEGKGK) and 99–101 (GHT). Asp72 (proton acceptor) is an active-site residue. Residues Asp72 and Gly99 each contribute to the Mg(2+) site. IMP contacts are provided by residues 72–75 (DEGK), 97–100 (NAGH), Thr189, Arg203, Gln283, Thr298, and Arg362. The active-site Proton donor is His100. A substrate-binding site is contributed by 358-364 (TTTGRPR). GTP-binding positions include Arg364, 390-392 (KLD), and 473-475 (GVG).

This sequence belongs to the adenylosuccinate synthetase family. In terms of assembly, homodimer. The cofactor is Mg(2+).

Its subcellular location is the plastid. It localises to the chloroplast. The catalysed reaction is IMP + L-aspartate + GTP = N(6)-(1,2-dicarboxyethyl)-AMP + GDP + phosphate + 2 H(+). It functions in the pathway purine metabolism; AMP biosynthesis via de novo pathway; AMP from IMP: step 1/2. Plays an important role in the de novo pathway and in the salvage pathway of purine nucleotide biosynthesis. Catalyzes the first committed step in the biosynthesis of AMP from IMP. The polypeptide is Adenylosuccinate synthetase, chloroplastic (Zea mays (Maize)).